Consider the following 266-residue polypeptide: Protein-ADP-ribose hydrolase (266 aa).

The Macro domain occupies 74–265 (TDLKDLKPIK…LYKEAFNRDA (192 aa)). Asp93, Ile94, and Asn107 together coordinate ADP-D-ribose. Zn(2+) contacts are provided by Cys113, His118, and Cys120. ADP-D-ribose is bound by residues Cys120, Ile121, Asp122, Ser212, Thr213, Gly214, and Phe216.

The protein belongs to the MacroD-type family. Zn-Macro subfamily. The cofactor is Zn(2+).

The catalysed reaction is 4-O-(ADP-D-ribosyl)-L-aspartyl-[protein] + H2O = L-aspartyl-[protein] + ADP-D-ribose + H(+). In terms of biological role, ADP-ribosylhydrolase that specifically reverses the SirTM-mediated mono-ADP-ribosylation at an asparatate residue of GcvH-L, by releasing ADP-ribose from the target protein. May play a role in the regulation of the response to host-induced oxidative stress. The protein is Protein-ADP-ribose hydrolase of Staphylococcus aureus (strain COL).